The sequence spans 517 residues: Squalene epoxidase 6 (517 aa).

Helical transmembrane passes span 3–23 (FTHV…VFYL) and 45–65 (AADV…YALA). Residues 55 to 56 (VG), 75 to 76 (ER), R83, F88, R156, V172, D336, and M349 contribute to the FAD site. The chain crosses the membrane as a helical span at residues 447–467 (LVYHLCAITLSSIGQLLSPFP).

This sequence belongs to the squalene monooxygenase family. Requires FAD as cofactor. In terms of tissue distribution, expressed in seedlings, leaves, stems, inflorescences and siliques.

It localises to the membrane. It carries out the reaction squalene + reduced [NADPH--hemoprotein reductase] + O2 = (S)-2,3-epoxysqualene + oxidized [NADPH--hemoprotein reductase] + H2O + H(+). Its pathway is terpene metabolism; lanosterol biosynthesis; lanosterol from farnesyl diphosphate: step 2/3. Its function is as follows. Catalyzes the stereospecific oxidation of squalene to (S)-2,3-epoxysqualene, and is considered to be a rate-limiting enzyme in steroid biosynthesis. This chain is Squalene epoxidase 6 (SQE6), found in Arabidopsis thaliana (Mouse-ear cress).